We begin with the raw amino-acid sequence, 269 residues long: dITP/XTP pyrophosphatase (269 aa).

22–27 is a substrate binding site; it reads SNNAHK. D82 serves as the catalytic Proton acceptor. A Mg(2+)-binding site is contributed by D82. Substrate is bound by residues S83, 165–168, K188, and 193–194; these read FGYD and HR.

It belongs to the HAM1 NTPase family. Homodimer. Mg(2+) is required as a cofactor.

The enzyme catalyses XTP + H2O = XMP + diphosphate + H(+). The catalysed reaction is dITP + H2O = dIMP + diphosphate + H(+). It carries out the reaction ITP + H2O = IMP + diphosphate + H(+). Pyrophosphatase that catalyzes the hydrolysis of nucleoside triphosphates to their monophosphate derivatives, with a high preference for the non-canonical purine nucleotides XTP (xanthosine triphosphate), dITP (deoxyinosine triphosphate) and ITP. Seems to function as a house-cleaning enzyme that removes non-canonical purine nucleotides from the nucleotide pool, thus preventing their incorporation into DNA/RNA and avoiding chromosomal lesions. In Treponema pallidum (strain Nichols), this protein is dITP/XTP pyrophosphatase.